Consider the following 126-residue polypeptide: Aspartate 1-decarboxylase (126 aa).

The active-site Schiff-base intermediate with substrate; via pyruvic acid is the Ser-25. Residue Ser-25 is modified to Pyruvic acid (Ser). A substrate-binding site is contributed by Thr-57. Tyr-58 serves as the catalytic Proton donor. 73 to 75 (GAA) serves as a coordination point for substrate.

It belongs to the PanD family. Heterooctamer of four alpha and four beta subunits. Requires pyruvate as cofactor. In terms of processing, is synthesized initially as an inactive proenzyme, which is activated by self-cleavage at a specific serine bond to produce a beta-subunit with a hydroxyl group at its C-terminus and an alpha-subunit with a pyruvoyl group at its N-terminus.

The protein localises to the cytoplasm. It catalyses the reaction L-aspartate + H(+) = beta-alanine + CO2. The protein operates within cofactor biosynthesis; (R)-pantothenate biosynthesis; beta-alanine from L-aspartate: step 1/1. Its function is as follows. Catalyzes the pyruvoyl-dependent decarboxylation of aspartate to produce beta-alanine. The protein is Aspartate 1-decarboxylase of Methylobacillus flagellatus (strain ATCC 51484 / DSM 6875 / VKM B-1610 / KT).